Reading from the N-terminus, the 154-residue chain is Large ribosomal subunit protein uL13 (154 aa).

The interval 131–154 (DHKHEAQQPEVVDFKSMNSKNTRG) is disordered.

It belongs to the universal ribosomal protein uL13 family. In terms of assembly, part of the 50S ribosomal subunit.

Its function is as follows. This protein is one of the early assembly proteins of the 50S ribosomal subunit, although it is not seen to bind rRNA by itself. It is important during the early stages of 50S assembly. This is Large ribosomal subunit protein uL13 from Maricaulis maris (strain MCS10) (Caulobacter maris).